A 201-amino-acid polypeptide reads, in one-letter code: Flagellin B1 (201 aa).

Positions 1 to 11 are excised as a propeptide; the sequence is MFEQNDDRDRG.

The protein belongs to the archaeal flagellin family.

Its subcellular location is the archaeal flagellum. Functionally, flagellin is the subunit protein which polymerizes to form the filaments of archaeal flagella. The sequence is that of Flagellin B1 (flaB1) from Natrialba magadii (strain ATCC 43099 / DSM 3394 / CCM 3739 / CIP 104546 / IAM 13178 / JCM 8861 / NBRC 102185 / NCIMB 2190 / MS3) (Natronobacterium magadii).